Consider the following 165-residue polypeptide: Regulator of ribonuclease activity A (165 aa).

This sequence belongs to the RraA family. Homotrimer. Binds to both RNA-binding sites in the C-terminal region of Rne and to RhlB.

The protein resides in the cytoplasm. Globally modulates RNA abundance by binding to RNase E (Rne) and regulating its endonucleolytic activity. Can modulate Rne action in a substrate-dependent manner by altering the composition of the degradosome. Modulates RNA-binding and helicase activities of the degradosome. The chain is Regulator of ribonuclease activity A from Actinobacillus pleuropneumoniae serotype 7 (strain AP76).